A 171-amino-acid polypeptide reads, in one-letter code: Methylated-DNA--protein-cysteine methyltransferase (171 aa).

The active-site Nucleophile; methyl group acceptor is the cysteine 139.

Belongs to the MGMT family.

It is found in the cytoplasm. The enzyme catalyses a 6-O-methyl-2'-deoxyguanosine in DNA + L-cysteinyl-[protein] = S-methyl-L-cysteinyl-[protein] + a 2'-deoxyguanosine in DNA. The catalysed reaction is a 4-O-methyl-thymidine in DNA + L-cysteinyl-[protein] = a thymidine in DNA + S-methyl-L-cysteinyl-[protein]. Involved in the cellular defense against the biological effects of O6-methylguanine (O6-MeG) and O4-methylthymine (O4-MeT) in DNA. Repairs the methylated nucleobase in DNA by stoichiometrically transferring the methyl group to a cysteine residue in the enzyme. This is a suicide reaction: the enzyme is irreversibly inactivated. In Shigella flexneri, this protein is Methylated-DNA--protein-cysteine methyltransferase.